Here is a 301-residue protein sequence, read N- to C-terminus: (R)-2-haloacid dehalogenase (301 aa).

This sequence belongs to the HAD-like hydrolase superfamily. S-2-haloalkanoic acid dehalogenase family. Homotetramer.

The enzyme catalyses an (R)-2-haloacid + H2O = a (2S)-2-hydroxycarboxylate + a halide anion + H(+). In terms of biological role, catalyzes the hydrolytic dehalogenation of small (R)-2-haloalkanoic acids to yield the corresponding (S)-2-hydroxyalkanoic acids. Acts on acids of short chain lengths, C(2) to C(4), with inversion of configuration at C-2. This Pseudomonas putida (Arthrobacter siderocapsulatus) protein is (R)-2-haloacid dehalogenase (hadD).